The chain runs to 101 residues: MNKLTIIFFTILLLTYIIVEKEALKIEDLPEPESYKKAKQLAVKDANGDKRAEGIALDFLRQNRRNCTVNCDLVLTCPLLTPECCPKKNDDCLKLDTVKNG.

The first 23 residues, Met1–Ala23, serve as a signal peptide directing secretion.

Post-translationally, contains 3 disulfide bonds. In terms of tissue distribution, expressed by the venom gland.

The protein localises to the secreted. Voltage-gated calcium channel inhibitor. This Scolopendra dehaani (Thai centipede) protein is Omega-scoloptoxin(10)-Ssd1b.